The primary structure comprises 94 residues: C-X-C motif chemokine 11-1 (94 aa).

A signal peptide spans 1–19; it reads MKTVTALLLVSLAVVAIEG. Intrachain disulfides connect C27–C54 and C29–C71.

The protein belongs to the intercrine alpha (chemokine CxC) family.

The protein localises to the secreted. Ligand for cxcr3.2. Chemotactic for macrophages. The sequence is that of C-X-C motif chemokine 11-1 (cxcl11.1) from Danio rerio (Zebrafish).